The sequence spans 185 residues: GTP cyclohydrolase 1 (185 aa).

The Zn(2+) site is built by Cys-76, His-79, and Cys-147.

It belongs to the GTP cyclohydrolase I family. In terms of assembly, toroid-shaped homodecamer, composed of two pentamers of five dimers.

It carries out the reaction GTP + H2O = 7,8-dihydroneopterin 3'-triphosphate + formate + H(+). Its pathway is cofactor biosynthesis; 7,8-dihydroneopterin triphosphate biosynthesis; 7,8-dihydroneopterin triphosphate from GTP: step 1/1. The protein is GTP cyclohydrolase 1 of Clostridium perfringens (strain 13 / Type A).